Consider the following 508-residue polypeptide: Lysine--tRNA ligase (508 aa).

Residues glutamate 418 and glutamate 425 each contribute to the Mg(2+) site.

This sequence belongs to the class-II aminoacyl-tRNA synthetase family. Homodimer. Mg(2+) serves as cofactor.

The protein localises to the cytoplasm. The enzyme catalyses tRNA(Lys) + L-lysine + ATP = L-lysyl-tRNA(Lys) + AMP + diphosphate. The polypeptide is Lysine--tRNA ligase (Burkholderia thailandensis (strain ATCC 700388 / DSM 13276 / CCUG 48851 / CIP 106301 / E264)).